We begin with the raw amino-acid sequence, 595 residues long: L-fucose isomerase (595 aa).

Active-site proton acceptor residues include E341 and D365. Residues E341, D365, and H531 each contribute to the Mn(2+) site.

Belongs to the L-fucose isomerase family. The cofactor is Mn(2+).

Its subcellular location is the cytoplasm. The enzyme catalyses L-fucose = L-fuculose. It participates in carbohydrate degradation; L-fucose degradation; L-lactaldehyde and glycerone phosphate from L-fucose: step 1/3. Converts the aldose L-fucose into the corresponding ketose L-fuculose. This is L-fucose isomerase from Clostridium perfringens (strain 13 / Type A).